The sequence spans 149 residues: Large ribosomal subunit protein bL9 (149 aa).

Belongs to the bacterial ribosomal protein bL9 family.

Functionally, binds to the 23S rRNA. In Salmonella dublin (strain CT_02021853), this protein is Large ribosomal subunit protein bL9.